The chain runs to 389 residues: MTEPLPDVTFPQGFRAAAMAAGIKPSGKPDLSCVVSERDCAWAFAGTRSTTAAACVTRNRELYASGAPLRALVVNAGVANAATGQQGARDNADMADALASVLAVGEAEVITASTGVIGHLLPMDKVLSGVEHLPEELEGAALPFATAIMTTDTRSKLAHVTLSNGARIVGTAKGSGMIHPDMATMFAFAFTDAQVDQGALRGAFPAIVARTFNAVTVDGDTSTNDMTAVLANGAAGETDLTEFLTALEGVMRDLARQIAADGEGATRLLTVRVTGAASEAEALGAARTCCVSPLLKSAVHGADPNWGRVIMAVGRSGAGVKVEAMKVSVQGVPVFAGGPLNYDAAAVSQSMKTDEVIFDVDLGVGSARGEAWGCDLSAEYVSINADYTT.

Substrate-binding residues include Thr-150, Lys-173, Thr-184, Glu-263, Asn-384, and Thr-389. The Nucleophile role is filled by Thr-184.

The protein belongs to the ArgJ family. As to quaternary structure, heterotetramer of two alpha and two beta chains.

The protein resides in the cytoplasm. It carries out the reaction N(2)-acetyl-L-ornithine + L-glutamate = N-acetyl-L-glutamate + L-ornithine. The catalysed reaction is L-glutamate + acetyl-CoA = N-acetyl-L-glutamate + CoA + H(+). The protein operates within amino-acid biosynthesis; L-arginine biosynthesis; L-ornithine and N-acetyl-L-glutamate from L-glutamate and N(2)-acetyl-L-ornithine (cyclic): step 1/1. Its pathway is amino-acid biosynthesis; L-arginine biosynthesis; N(2)-acetyl-L-ornithine from L-glutamate: step 1/4. Its function is as follows. Catalyzes two activities which are involved in the cyclic version of arginine biosynthesis: the synthesis of N-acetylglutamate from glutamate and acetyl-CoA as the acetyl donor, and of ornithine by transacetylation between N(2)-acetylornithine and glutamate. The chain is Arginine biosynthesis bifunctional protein ArgJ from Deinococcus radiodurans (strain ATCC 13939 / DSM 20539 / JCM 16871 / CCUG 27074 / LMG 4051 / NBRC 15346 / NCIMB 9279 / VKM B-1422 / R1).